Reading from the N-terminus, the 403-residue chain is D-mannonate dehydratase Caul1427 (403 aa).

Substrate contacts are provided by asparagine 38 and histidine 123. The active-site Proton donor/acceptor is the tyrosine 160. Mg(2+) is bound at residue aspartate 211. The Proton donor/acceptor role is filled by histidine 213. Mg(2+) is bound by residues glutamate 237 and glutamate 263. 5 residues coordinate substrate: glutamate 263, arginine 284, histidine 313, aspartate 317, and glutamate 340.

This sequence belongs to the mandelate racemase/muconate lactonizing enzyme family. GalD subfamily. The cofactor is Mg(2+).

It carries out the reaction D-mannonate = 2-dehydro-3-deoxy-D-gluconate + H2O. It participates in carbohydrate metabolism; pentose and glucuronate interconversion. Its function is as follows. Catalyzes the dehydration of D-mannonate. Has no detectable activity with a panel of 70 other acid sugars (in vitro). The polypeptide is D-mannonate dehydratase Caul1427 (Caulobacter sp. (strain K31)).